Consider the following 681-residue polypeptide: Leucine-rich repeat, immunoglobulin-like domain and transmembrane domain-containing protein 3 (681 aa).

The first 19 residues, 1 to 19 (MWLSACLCLVLSFLGGVNG), serve as a signal peptide directing secretion. A glycan (N-linked (GlcNAc...) asparagine) is linked at N18. Topologically, residues 20–584 (TCPSQCSCEY…RVEGRGSQWS (565 aa)) are lumenal. LRR repeat units lie at residues 56 to 79 (PVDT…AFYY), 80 to 103 (LVEL…SFYN), 104 to 128 (LRQL…LLDM), 129 to 151 (PHLR…AVRY), and 152 to 175 (LRNL…FLDS). Positions 254 to 344 (PSVMMSATKI…GISEAVVTVT (91 aa)) constitute an Ig-like domain. The cysteines at positions 275 and 328 are disulfide-linked. N296 carries an N-linked (GlcNAc...) asparagine glycan. Disordered regions lie at residues 350-391 (TTTL…GLTS) and 425-464 (TSVQ…KFPP). Over residues 378 to 391 (TPPSKSWLSPGLTS) the composition is skewed to polar residues. 2 N-linked (GlcNAc...) asparagine glycosylation sites follow: N485 and N506. A helical membrane pass occupies residues 585–605 (LLLVVTSTACVIVVPLICFLL). The Cytoplasmic portion of the chain corresponds to 606–681 (YKVCKLQCTS…SDGCRTEYYG (76 aa)).

Detected in the outer plexiform layer (OPL) of the retina, where it localizes to rod and cone ON-bipolar cells (at protein level). Also detected in bipolar cell bodies in the inner retinal layer (INL) (at protein level).

Its subcellular location is the cell projection. The protein resides in the dendrite. It localises to the perikaryon. The protein localises to the endoplasmic reticulum membrane. Its function is as follows. Plays a role in the synapse formation and synaptic transmission between cone photoreceptor cells and retinal bipolar cells. Required for normal transmission of a light-evoked stimulus from the cone photoreceptor cells to the ON-bipolar cells and ON-ganglion cells in the inner retina. Required in retinal ON-bipolar cells for normal localization of the cation channel TRPM1 at dendrite tips. Seems to play a specific role in synaptic contacts made by ON-bipolar cells with cone photoreceptor pedicles. May also have a role in cone synapse formation. Might facilitate FGFR1 exit from the endoplasmic reticulum to the Golgi. Could be a regulator of the FGFRs. In Mus musculus (Mouse), this protein is Leucine-rich repeat, immunoglobulin-like domain and transmembrane domain-containing protein 3.